The chain runs to 364 residues: tRNA-specific 2-thiouridylase MnmA 1 (364 aa).

Residues 10–17 and Met36 each bind ATP; that span reads GMSGGVDS. Cys106 (nucleophile) is an active-site residue. A disulfide bridge connects residues Cys106 and Cys204. Gly130 is a binding site for ATP. The interval 154–156 is interaction with tRNA; it reads KDQ. Catalysis depends on Cys204, which acts as the Cysteine persulfide intermediate. The interval 310-311 is interaction with tRNA; it reads RY.

The protein belongs to the MnmA/TRMU family.

It is found in the cytoplasm. The enzyme catalyses S-sulfanyl-L-cysteinyl-[protein] + uridine(34) in tRNA + AH2 + ATP = 2-thiouridine(34) in tRNA + L-cysteinyl-[protein] + A + AMP + diphosphate + H(+). In terms of biological role, catalyzes the 2-thiolation of uridine at the wobble position (U34) of tRNA, leading to the formation of s(2)U34. The protein is tRNA-specific 2-thiouridylase MnmA 1 of Thermoanaerobacter pseudethanolicus (strain ATCC 33223 / 39E) (Clostridium thermohydrosulfuricum).